The following is a 969-amino-acid chain: Poly(ADP-ribose) glycohydrolase (969 aa).

3 disordered regions span residues 1-149 (MSAG…QQQT), 161-341 (HAEQ…CQAR), and 368-400 (NNAGTSDLNAKPSGNSSSLNVECRSSKQHGKRD). An A-domain region spans residues 1 to 449 (MSAGPGWEPC…LPPEKKWLGT (449 aa)). A Nuclear localization signal motif is present at residues 10-16 (CTKRPRW). The segment covering 69–84 (NATSFVFKQKTITTWM) has biased composition (polar residues). A PIP-box (PCNA interacting peptide) motif is present at residues 77-84 (QKTITTWM). A compositionally biased stretch (basic and acidic residues) spans 87–100 (KGPKTAESESKENN). The span at 101–113 (NTRIDSMMSSVQK) shows a compositional bias: polar residues. Basic and acidic residues predominate over residues 116–125 (FYPHKVEKLE). Polar residues-rich tracts occupy residues 128-149 (PQLNLDKSPTEKSSQYLNQQQT) and 179-189 (QLSNANIGQSP). S135 is subject to Phosphoserine. A Phosphothreonine modification is found at T137. Positions 190–205 (HTDDHSDTDHEEDRDN) are enriched in basic and acidic residues. S195 carries the post-translational modification Phosphoserine. T197 is subject to Phosphothreonine. Polar residues predominate over residues 226 to 237 (ARSNCKCSGSRQ). Residues S256, S259, S281, S286, S293, S297, and S311 each carry the phosphoserine modification. A compositionally biased stretch (polar residues) spans 275 to 284 (KLTGQESSLG). The span at 311 to 325 (SEADEETSPVFDEQD) shows a compositional bias: acidic residues. Composition is skewed to polar residues over residues 329–339 (SQTANKLSSCQ) and 369–387 (NAGTSDLNAKPSGNSSSLN). K334 carries the post-translational modification N6-acetyllysine. Residues 603–788 (QPIPLLKQKM…TEQYSEYTGY (186 aa)) are catalytic. A substrate-binding site is contributed by 719 to 720 (IE). D730 is an active-site residue. Substrate contacts are provided by N733 and Q747. Active-site residues include E748 and E749. Residues Y788 and 862-867 (NWGCGA) each bind substrate.

This sequence belongs to the poly(ADP-ribose) glycohydrolase family. Interacts with PCNA. Interacts with NUDT5.

The protein localises to the nucleus. The enzyme catalyses [(1''-&gt;2')-ADP-alpha-D-ribose](n) + H2O = [(1''-&gt;2')-ADP-alpha-D-ribose](n-1) + ADP-D-ribose. Poly(ADP-ribose) glycohydrolase that degrades poly(ADP-ribose) by hydrolyzing the ribose-ribose bonds present in poly(ADP-ribose). PARG acts both as an endo- and exoglycosidase, releasing poly(ADP-ribose) of different length as well as ADP-ribose monomers. It is however unable to cleave the ester bond between the terminal ADP-ribose and ADP-ribosylated residues, leaving proteins that are mono-ADP-ribosylated. Poly(ADP-ribose) is synthesized after DNA damage is only present transiently and is rapidly degraded by PARG. Required to prevent detrimental accumulation of poly(ADP-ribose) upon prolonged replicative stress, while it is not required for recovery from transient replicative stress. Responsible for the prevalence of mono-ADP-ribosylated proteins in cells, thanks to its ability to degrade poly(ADP-ribose) without cleaving the terminal protein-ribose bond. Required for retinoid acid-dependent gene transactivation, probably by removing poly(ADP-ribose) from histone demethylase KDM4D, allowing chromatin derepression at RAR-dependent gene promoters. Involved in the synthesis of ATP in the nucleus, together with PARP1, NMNAT1 and NUDT5. Nuclear ATP generation is required for extensive chromatin remodeling events that are energy-consuming. This is Poly(ADP-ribose) glycohydrolase from Mus musculus (Mouse).